The chain runs to 64 residues: Crotamine CRO3 (64 aa).

Residues 1 to 22 (MILYLLFAFLFLAFLSEPGNAY) form the signal peptide. Intrachain disulfides connect C25–C57, C32–C51, and C39–C58.

Belongs to the crotamine-myotoxin family. Monomer. In terms of tissue distribution, expressed by the venom gland.

Its subcellular location is the secreted. Its function is as follows. Cationic peptide that possesses multiple functions. It acts as a cell-penetrating peptide (CPP), and as a potent voltage-gated potassium channel (Kv) inhibitor. It exhibits antimicrobial activities, hind limb paralysis, and severe muscle necrosis by a non-enzymatic mechanism. The chain is Crotamine CRO3 (CRO3) from Crotalus durissus terrificus (South American rattlesnake).